We begin with the raw amino-acid sequence, 321 residues long: Torsin-2A (321 aa).

An N-terminal signal peptide occupies residues Met-1–Ala-26. Gly-93–Ser-100 lines the ATP pocket. An N-linked (GlcNAc...) asparagine glycan is attached at Asn-149.

The protein belongs to the ClpA/ClpB family. Torsin subfamily. In terms of assembly, homohexamer. Interacts with TOR1AIP1.

It is found in the endoplasmic reticulum lumen. This is Torsin-2A (TOR2A) from Bos taurus (Bovine).